Reading from the N-terminus, the 253-residue chain is 28 kDa inner dynein arm light chain, axonemal (253 aa).

The tract at residues 19 to 44 is disordered; it reads TSKDKGKGAKGTPGKKGALPPVEQKP. The stretch at 160–239 forms a coiled coil; it reads IRKALQTEQG…LKQQLETFLV (80 aa).

Belongs to the inner dynein arm light chain family.

Its subcellular location is the cytoplasm. It is found in the cytoskeleton. The protein resides in the flagellum axoneme. Plays a dynamic role in flagellar motility. May be necessary for stable assembly of a subset of inner dynein arms or for the binding of these arms to the outer doublet microtubules of the axoneme. The sequence is that of 28 kDa inner dynein arm light chain, axonemal (IDA4) from Chlamydomonas reinhardtii (Chlamydomonas smithii).